A 217-amino-acid chain; its full sequence is Phosphoribosylformylglycinamidine synthase subunit PurQ (217 aa).

Positions 2-217 (SIGVLVFPGS…GRVLLQGLLS (216 aa)) constitute a Glutamine amidotransferase type-1 domain. The Nucleophile role is filled by Cys86. Active-site residues include His194 and Glu196.

As to quaternary structure, part of the FGAM synthase complex composed of 1 PurL, 1 PurQ and 2 PurS subunits.

The protein localises to the cytoplasm. The enzyme catalyses N(2)-formyl-N(1)-(5-phospho-beta-D-ribosyl)glycinamide + L-glutamine + ATP + H2O = 2-formamido-N(1)-(5-O-phospho-beta-D-ribosyl)acetamidine + L-glutamate + ADP + phosphate + H(+). The catalysed reaction is L-glutamine + H2O = L-glutamate + NH4(+). Its pathway is purine metabolism; IMP biosynthesis via de novo pathway; 5-amino-1-(5-phospho-D-ribosyl)imidazole from N(2)-formyl-N(1)-(5-phospho-D-ribosyl)glycinamide: step 1/2. Part of the phosphoribosylformylglycinamidine synthase complex involved in the purines biosynthetic pathway. Catalyzes the ATP-dependent conversion of formylglycinamide ribonucleotide (FGAR) and glutamine to yield formylglycinamidine ribonucleotide (FGAM) and glutamate. The FGAM synthase complex is composed of three subunits. PurQ produces an ammonia molecule by converting glutamine to glutamate. PurL transfers the ammonia molecule to FGAR to form FGAM in an ATP-dependent manner. PurS interacts with PurQ and PurL and is thought to assist in the transfer of the ammonia molecule from PurQ to PurL. The protein is Phosphoribosylformylglycinamidine synthase subunit PurQ of Parasynechococcus marenigrum (strain WH8102).